A 303-amino-acid polypeptide reads, in one-letter code: Dehydrodolichyl diphosphate synthase 1 (303 aa).

The chain crosses the membrane as a helical span at residues 14–34 (LLFLFLIPCLFITSYIGFPVF).

The protein belongs to the UPP synthase family. Requires Mg(2+) as cofactor. Expressed in low levels in the whole plant. Preferentially expressed in roots.

It localises to the endoplasmic reticulum membrane. It catalyses the reaction n isopentenyl diphosphate + (2E,6E)-farnesyl diphosphate = a di-trans,poly-cis-polyprenyl diphosphate + n diphosphate. It participates in protein modification; protein glycosylation. Functionally, catalyzes cis-prenyl chain elongation to produce the polyprenyl backbone of dolichol, a glycosyl carrier-lipid required for the biosynthesis of several classes of glycoprotein. The sequence is that of Dehydrodolichyl diphosphate synthase 1 (DPS) from Arabidopsis thaliana (Mouse-ear cress).